We begin with the raw amino-acid sequence, 358 residues long: 3-isopropylmalate dehydrogenase (358 aa).

NAD(+) is bound at residue 77-90 (GPKWTNLPPDQQPE). Residues arginine 98, arginine 108, arginine 137, and aspartate 226 each contribute to the substrate site. The Mg(2+) site is built by aspartate 226, aspartate 250, and aspartate 254. 284–296 (GSAPDIAGKGIAN) lines the NAD(+) pocket.

The protein belongs to the isocitrate and isopropylmalate dehydrogenases family. LeuB type 1 subfamily. As to quaternary structure, homodimer. Requires Mg(2+) as cofactor. Mn(2+) is required as a cofactor.

The protein resides in the cytoplasm. It catalyses the reaction (2R,3S)-3-isopropylmalate + NAD(+) = 4-methyl-2-oxopentanoate + CO2 + NADH. It functions in the pathway amino-acid biosynthesis; L-leucine biosynthesis; L-leucine from 3-methyl-2-oxobutanoate: step 3/4. Catalyzes the oxidation of 3-carboxy-2-hydroxy-4-methylpentanoate (3-isopropylmalate) to 3-carboxy-4-methyl-2-oxopentanoate. The product decarboxylates to 4-methyl-2 oxopentanoate. The polypeptide is 3-isopropylmalate dehydrogenase (Haemophilus influenzae (strain 86-028NP)).